The chain runs to 102 residues: Acid shock protein (102 aa).

Positions 1-21 (MKKVLALVVAAAMGLSSAAFA) are cleaved as a signal peptide. Over residues 22 to 41 (AETATTPAPTATTTKAAPAK) the composition is skewed to low complexity. A propeptide spanning residues 22–58 (AETATTPAPTATTTKAAPAKTTHHKKQHKAAPAQKAQ) is cleaved from the precursor. Residues 22–102 (AETATTPAPT…PAKPAAQPAA (81 aa)) form a disordered region. Basic residues predominate over residues 80–90 (AAKKHAKKHSH). Over residues 91 to 102 (QQPAKPAAQPAA) the composition is skewed to low complexity.

It belongs to the Asr family. Proteolytic processing gives rise to the active protein.

The protein localises to the periplasm. In terms of biological role, required for growth and/or survival at acidic conditions. This chain is Acid shock protein (asr), found in Escherichia coli O157:H7.